Consider the following 124-residue polypeptide: Fluoride-specific ion channel FluC (124 aa).

4 helical membrane-spanning segments follow: residues 4–24 (ILFV…ISIF), 35–55 (FGTL…YALG), 70–90 (VGLL…LLLI), and 95–115 (WLKA…MVYL). Na(+)-binding residues include G74 and T77.

It belongs to the fluoride channel Fluc/FEX (TC 1.A.43) family.

It localises to the cell inner membrane. The catalysed reaction is fluoride(in) = fluoride(out). With respect to regulation, na(+) is not transported, but it plays an essential structural role and its presence is essential for fluoride channel function. Fluoride-specific ion channel. Important for reducing fluoride concentration in the cell, thus reducing its toxicity. The protein is Fluoride-specific ion channel FluC of Shewanella woodyi (strain ATCC 51908 / MS32).